Consider the following 85-residue polypeptide: Large ribosomal subunit protein bL31B (85 aa).

Belongs to the bacterial ribosomal protein bL31 family. Type B subfamily. As to quaternary structure, part of the 50S ribosomal subunit.

This Clavibacter sepedonicus (Clavibacter michiganensis subsp. sepedonicus) protein is Large ribosomal subunit protein bL31B.